The sequence spans 165 residues: Ribosomal RNA large subunit methyltransferase H (165 aa).

Gly109 provides a ligand contact to S-adenosyl-L-methionine.

Belongs to the RNA methyltransferase RlmH family. As to quaternary structure, homodimer.

The protein resides in the cytoplasm. The catalysed reaction is pseudouridine(1915) in 23S rRNA + S-adenosyl-L-methionine = N(3)-methylpseudouridine(1915) in 23S rRNA + S-adenosyl-L-homocysteine + H(+). In terms of biological role, specifically methylates the pseudouridine at position 1915 (m3Psi1915) in 23S rRNA. The protein is Ribosomal RNA large subunit methyltransferase H of Methylorubrum populi (strain ATCC BAA-705 / NCIMB 13946 / BJ001) (Methylobacterium populi).